A 243-amino-acid chain; its full sequence is ATP synthase subunit a, chloroplastic (243 aa).

A run of 5 helical transmembrane segments spans residues 32–52, 91–111, 130–150, 195–215, and 216–236; these read AQVLITSWFVLGLLLGIALIA, IPFVGTLFLFIFVSNWSGALI, INTTVALALLTSVAYFYAGLN, LVVAVLVSLVPLVIPVPMMFL, and GLFTSGIQALIFATLAGAYIG.

This sequence belongs to the ATPase A chain family. As to quaternary structure, F-type ATPases have 2 components, CF(1) - the catalytic core - and CF(0) - the membrane proton channel. CF(1) has five subunits: alpha(3), beta(3), gamma(1), delta(1), epsilon(1). CF(0) has four main subunits: a, b, b' and c.

The protein resides in the plastid. Its subcellular location is the chloroplast thylakoid membrane. In terms of biological role, key component of the proton channel; it plays a direct role in the translocation of protons across the membrane. This Chaetosphaeridium globosum (Charophycean green alga) protein is ATP synthase subunit a, chloroplastic.